The following is a 338-amino-acid chain: MRRLNRKNNEALKKLNDRQRKVLYCIVREYIENKKPVSSQRVLEVSNIEFSSATIRNDMKKLEYLGYIYQPHTSAGRIPTDKGLRFYYEEMLKISKETSEADLAVETFKSVPLADPEKILFLAGNLLARLTQGYVLIERPNTRDLKILRVMLIPVSEDYLIFSILTEFGVSRVTPIKTQERLNWEEIERQLNFLLRGRTIGEVLMGKIESLKGSGFLRLIESLIGETVERYLDAGLENLLKDETLTLEDIRNLLEEVKDQKFLESLVGEGITVRIGREIGRKNLEKFAVFSGRYFKGESPIGSVYFFTSKVTRYDRNHKIFEYILNRLSEYFTSTSRR.

This sequence belongs to the HrcA family.

Functionally, negative regulator of class I heat shock genes (grpE-dnaK-dnaJ and groELS operons). Prevents heat-shock induction of these operons. The sequence is that of Heat-inducible transcription repressor HrcA from Thermotoga sp. (strain RQ2).